The chain runs to 196 residues: Putative NADH dehydrogenase/NAD(P)H nitroreductase PXO_03909 (196 aa).

This sequence belongs to the nitroreductase family. HadB/RutE subfamily. It depends on FMN as a cofactor.

This is Putative NADH dehydrogenase/NAD(P)H nitroreductase PXO_03909 from Xanthomonas oryzae pv. oryzae (strain PXO99A).